The following is a 557-amino-acid chain: Vacuolar protein sorting-associated protein 30 (557 aa).

Disordered regions lie at residues 93–149 (DDDN…ENQQ) and 218–238 (NKEI…SEKE). Residues 135–147 (DEEEQEATDEDEN) show a composition bias toward acidic residues. Residue T142 is modified to Phosphothreonine. Positions 189–322 (LINRLKSEYD…QLDKLRKINI (134 aa)) form a coiled coil. The BARA stretch occupies residues 320-539 (INIFNATFKI…LAFSSNLLSK (220 aa)). A required for membrane-association, autophagic function during starvation and normal autophagosome morphology region spans residues 515–540 (WTTAMKFLLTNVKWLLAFSSNLLSKS).

Belongs to the beclin family. As to quaternary structure, component of the autophagy-specific VPS34 PI3-kinase complex I composed of VPS15, VPS30, VPS34, ATG14 and ATG38; and of the VPS34 PI3-kinase complex II composed of VPS15, VPS30, VPS34 and VPS38.

It is found in the endosome membrane. The protein localises to the vacuole membrane. Its subcellular location is the preautophagosomal structure membrane. Required for cytoplasm to vacuole transport (Cvt), autophagy, nucleophagy, and mitophagy, as a part of the autophagy-specific VPS34 PI3-kinase complex I. This complex is essential to recruit the ATG8-phosphatidylinositol conjugate and the ATG12-ATG5 conjugate to the pre-autophagosomal structure. Also involved in endosome-to-Golgi retrograde transport as part of the VPS34 PI3-kinase complex II. This second complex is required for the endosome-to-Golgi retrieval of PEP1 and KEX2, and the recruitment of VPS5 and VPS7, two components of the retromer complex, to endosomal membranes (probably through the synthesis of a specific pool of phosphatidylinositol 3-phosphate recruiting the retromer to the endosomes). Also plays a role in regulation of filamentous growth. The polypeptide is Vacuolar protein sorting-associated protein 30 (Saccharomyces cerevisiae (strain ATCC 204508 / S288c) (Baker's yeast)).